The following is a 412-amino-acid chain: Maintenance of mitochondrial morphology protein 1 (412 aa).

At 1 to 81 the chain is on the lumenal side; the sequence is MTKELIKTEA…PANNWTFTQG (81 aa). Residues 82-102 traverse the membrane as a helical segment; it reads LVLGQISVIFIIIVFVKFFVF. The Cytoplasmic segment spans residues 103–412; that stretch reads ADSSTIPTKK…RSDSGTSENL (310 aa). The SMP-LTD domain maps to 165-382; the sequence is SPESLDWFNV…EPRFQVVRLP (218 aa). The segment at 389 to 412 is disordered; it reads KNTREPINKKTSVSRSDSGTSENL. The segment covering 397 to 412 has biased composition (polar residues); sequence KKTSVSRSDSGTSENL.

The protein belongs to the MMM1 family. Homodimer. Component of the ER-mitochondria encounter structure (ERMES) or MDM complex, composed of MMM1, MDM10, MDM12 and MDM34. An MMM1 homodimer associates with one molecule of MDM12 on each side in a pairwise head-to-tail manner, and the SMP-LTD domains of MMM1 and MDM12 generate a continuous hydrophobic tunnel for phospholipid trafficking.

The protein resides in the endoplasmic reticulum membrane. In terms of biological role, component of the ERMES/MDM complex, which serves as a molecular tether to connect the endoplasmic reticulum (ER) and mitochondria. Components of this complex are involved in the control of mitochondrial shape and protein biogenesis, and function in nonvesicular lipid trafficking between the ER and mitochondria. The MDM12-MMM1 subcomplex functions in the major beta-barrel assembly pathway that is responsible for biogenesis of all outer membrane beta-barrel proteins, and acts in a late step after the SAM complex. The MDM10-MDM12-MMM1 subcomplex further acts in the TOM40-specific pathway after the action of the MDM12-MMM1 complex. Essential for establishing and maintaining the structure of mitochondria and maintenance of mtDNA nucleoids. The chain is Maintenance of mitochondrial morphology protein 1 from Candida tropicalis (strain ATCC MYA-3404 / T1) (Yeast).